Here is a 283-residue protein sequence, read N- to C-terminus: ATP synthase gamma chain (283 aa).

It belongs to the ATPase gamma chain family. F-type ATPases have 2 components, CF(1) - the catalytic core - and CF(0) - the membrane proton channel. CF(1) has five subunits: alpha(3), beta(3), gamma(1), delta(1), epsilon(1). CF(0) has three main subunits: a, b and c.

The protein localises to the cell membrane. Produces ATP from ADP in the presence of a proton gradient across the membrane. The gamma chain is believed to be important in regulating ATPase activity and the flow of protons through the CF(0) complex. This Clostridium beijerinckii (strain ATCC 51743 / NCIMB 8052) (Clostridium acetobutylicum) protein is ATP synthase gamma chain.